The chain runs to 157 residues: uncharacterized protein (157 aa).

The N-terminal stretch at M1 to A28 is a signal peptide.

This is an uncharacterized protein from Bacillus subtilis (strain 168).